The sequence spans 123 residues: Kininogen (123 aa).

In terms of processing, bradykinin is released from kininogen by kallikrein. Post-translationally, N-glycosylated. Contains sulfated N-acetylglucosamine and O-acetylated sialic acids as terminal elements on biantennary and triantennary N-glycans.

In terms of biological role, inhibits papain and ficin (cysteine proteinases) but not trypsin (a serine proteinase). In Gadus morhua (Atlantic cod), this protein is Kininogen.